The following is a 1008-amino-acid chain: ATP-dependent DNA/RNA helicase DHX36 (1008 aa).

The interval 1-51 (MSYDYHQNWGRDGGPRSSGGGYGGGPAGGHGGNRGSGGGGGGGGGGRGGRG) is required for recruitment to cytoplasmic stress granules. Residues 1-58 (MSYDYHQNWGRDGGPRSSGGGYGGGPAGGHGGNRGSGGGGGGGGGGRGGRGRHPGHLK) are disordered. The interval 1 to 104 (MSYDYHQNWG…IVQLLNSVQA (104 aa)) is required for the pre-miR-134 transport. The tract at residues 1–200 (MSYDYHQNWG…KKNDLRYIEM (200 aa)) is necessary for nuclear and nucleolar caps localizations. A compositionally biased stretch (gly residues) spans 16 to 48 (RSSGGGYGGGPAGGHGGNRGSGGGGGGGGGGRG). A DSM (DHX36-specific motif) region spans residues 53-75 (HPGHLKGREIGMWYAKKQGQKNK). Residues 53 to 105 (HPGHLKGREIGMWYAKKQGQKNKEAERQERAVVHMDERREEQIVQLLNSVQAK) are required for G4-DNA- and G4-RNA-binding. The stretch at 72-157 (QKNKEAERQE…INQEKKMFRI (86 aa)) forms a coiled coil. RecA-like domain stretches follow at residues 106-386 (NDKE…MIHI) and 387-628 (PGFT…DYQL). S161 bears the Phosphoserine mark. The Helicase ATP-binding domain maps to 217 to 387 (VNLIDNHQVT…FGNCPMIHIP (171 aa)). 233 to 238 (GCGKTT) is a binding site for ATP. Residues 265–317 (RRISAISVAERVAAERAESCGSGNSTGYQIRLQSRLPRKQGSILYCTTGIILQ) form a necessary for interaction with single-stranded DNA at the 3'-end of the G4-DNA structure region. Residues 334–337 (DEIH) carry the DEAH box motif. Mg(2+) is bound by residues E335 and H337. The 171-residue stretch at 477–647 (ALIRYIVLEE…ELCLQIKILR (171 aa)) folds into the Helicase C-terminal domain. The necessary for interaction with single-stranded DNA at the 3'-end of the G4-DNA structure stretch occupies residues 498 to 557 (WDNISTLHDLLMSQVMFKSDKFLIIPLHSLMPTVNQTQVFKRTPPGVRKIVIATNIAETS). The short motif at 517-528 (DKFLIIPLHSLM) is the Nuclear localization signal element. Residues S557 and 602 to 605 (RAGR) contribute to the ATP site. Positions 629–698 (PEILRTPLEE…LGVHLARLPV (70 aa)) are WH domain. Necessary for interaction with single-stranded DNA at the 3'-end of the G4-DNA structure stretches follow at residues 638–697 (ELCL…ARLP), 849–860 (NLGKKRKMVKVY), and 870–900 (HPKSVNVEQTDFHYNWLIYHLKMRTSSIYLY). The segment at 841–905 (PKVAKIRLNL…SIYLYDCTEV (65 aa)) is OB-fold-like subdomains. K947 is modified (N6-acetyllysine). S963 carries the post-translational modification Phosphoserine.

It belongs to the DEAD box helicase family. DEAH subfamily. Found in a multi-helicase-TICAM1 complex at least composed of DHX36, DDX1, DDX21 and TICAM1; this complex exists in resting cells with or without dsRNA poly(I:C) ligand stimulation. Interacts (via C-terminus) with TICAM1 (via TIR domain). Interacts (via C-terminus) with DDX21; this interaction serves as bridges to TICAM1. Interacts with TERT; this interaction is dependent on the ability of DHX36 to bind to the G-quadruplex RNA (G4-RNA) structure present in the telomerase RNA template component (TERC). Interacts with DKC1; this interaction is dependent on the ability of DHX36 to bind to the G4-RNA structure present in TERC. Interacts with PARN; this interaction stimulates PARN to enhance uPA mRNA decay. Interacts with EXOSC3; this interaction occurs in a RNase-insensitive manner. Interacts with EXOSC10; this interaction occurs in a RNase-insensitive manner. Interacts with ILF3; this interaction occurs in a RNA-dependent manner. Interacts with ELAVL1; this interaction occurs in an RNA-dependent manner. Interacts with DDX5; this interaction occurs in a RNA-dependent manner. Interacts with DDX17; this interaction occurs in a RNA-dependent manner. Interacts with HDAC1; this interaction occurs in a RNA-dependent manner. Interacts with HDAC3; this interaction occurs in a RNA-dependent manner. Interacts with HDAC4. Interacts with AGO1. Interacts with AGO2. Interacts with ERCC6. Requires Mg(2+) as cofactor. As to expression, highly expressed in testis.

Its subcellular location is the nucleus. It is found in the cytoplasm. It localises to the cytosol. The protein localises to the stress granule. The protein resides in the nucleus speckle. Its subcellular location is the chromosome. It is found in the telomere. It localises to the mitochondrion. The protein localises to the perikaryon. The protein resides in the cell projection. Its subcellular location is the dendrite. It is found in the axon. The enzyme catalyses ATP + H2O = ADP + phosphate + H(+). Its activity is regulated as follows. ATPase activity is enhanced in the presence of homomeric poly(U) RNAs, but not by double-stranded DNA (dsDNA), double-stranded RNA (dsRNA) and tRNA. Multifunctional ATP-dependent helicase that unwinds G-quadruplex (G4) structures. Plays a role in many biological processes such as genomic integrity, gene expression regulations and as a sensor to initiate antiviral responses. G4 structures correspond to helical structures containing guanine tetrads. Binds with high affinity to and unwinds G4 structures that are formed in nucleic acids (G4-DNA and G4-RNA). Plays a role in genomic integrity. Converts the G4-RNA structure present in telomerase RNA template component (TREC) into a double-stranded RNA to promote P1 helix formation that acts as a template boundary ensuring accurate reverse transcription. Plays a role in transcriptional regulation. Resolves G4-DNA structures in promoters of genes, such as YY1, KIT/c-kit and ALPL and positively regulates their expression. Plays a role in post-transcriptional regulation. Unwinds a G4-RNA structure located in the 3'-UTR polyadenylation site of the pre-mRNA TP53 and stimulates TP53 pre-mRNA 3'-end processing in response to ultraviolet (UV)-induced DNA damage. Binds to the precursor-microRNA-134 (pre-miR-134) terminal loop and regulates its transport into the synapto-dendritic compartment. Involved in the pre-miR-134-dependent inhibition of target gene expression and the control of dendritic spine size. Plays a role in the regulation of cytoplasmic mRNA translation and mRNA stability. Binds to both G4-RNA structures and alternative non-quadruplex-forming sequence within the 3'-UTR of the PITX1 mRNA regulating negatively PITX1 protein expression. Binds to both G4-RNA structure in the 5'-UTR and AU-rich elements (AREs) localized in the 3'-UTR of NKX2-5 mRNA to either stimulate protein translation or induce mRNA decay in an ELAVL1-dependent manner, respectively. Also binds to ARE sequences present in several mRNAs mediating exosome-mediated 3'-5' mRNA degradation. Involved in cytoplasmic urokinase-type plasminogen activator (uPA) mRNA decay. Component of a multi-helicase-TICAM1 complex that acts as a cytoplasmic sensor of viral double-stranded RNA (dsRNA) and plays a role in the activation of a cascade of antiviral responses including the induction of pro-inflammatory cytokines via the adapter molecule TICAM1. Required for early embryonic development and hematopoiesis. Involved in the regulation of cardioblast differentiation and proliferation during heart development. Involved in spermatogonia differentiation. May play a role in ossification. This Homo sapiens (Human) protein is ATP-dependent DNA/RNA helicase DHX36.